Reading from the N-terminus, the 596-residue chain is Arginine--tRNA ligase (596 aa).

Positions 123–133 match the 'HIGH' region motif; sequence PNTNKPLHLGH.

Belongs to the class-I aminoacyl-tRNA synthetase family. Monomer.

It is found in the cytoplasm. The enzyme catalyses tRNA(Arg) + L-arginine + ATP = L-arginyl-tRNA(Arg) + AMP + diphosphate. The protein is Arginine--tRNA ligase of Amoebophilus asiaticus (strain 5a2).